We begin with the raw amino-acid sequence, 252 residues long: Ubiquinone biosynthesis O-methyltransferase (252 aa).

Arg41, Gly72, Asp93, and Met136 together coordinate S-adenosyl-L-methionine.

It belongs to the methyltransferase superfamily. UbiG/COQ3 family.

It carries out the reaction a 3-demethylubiquinol + S-adenosyl-L-methionine = a ubiquinol + S-adenosyl-L-homocysteine + H(+). The catalysed reaction is a 3-(all-trans-polyprenyl)benzene-1,2-diol + S-adenosyl-L-methionine = a 2-methoxy-6-(all-trans-polyprenyl)phenol + S-adenosyl-L-homocysteine + H(+). Its pathway is cofactor biosynthesis; ubiquinone biosynthesis. Functionally, O-methyltransferase that catalyzes the 2 O-methylation steps in the ubiquinone biosynthetic pathway. The sequence is that of Ubiquinone biosynthesis O-methyltransferase from Rhizobium leguminosarum bv. trifolii (strain WSM2304).